The sequence spans 109 residues: uncharacterized protein (109 aa).

Residues 75 to 95 traverse the membrane as a helical segment; the sequence is LHFFFLFWLLNFILFFRIHLY.

It localises to the membrane. This is an uncharacterized protein from Schizosaccharomyces pombe (strain 972 / ATCC 24843) (Fission yeast).